Here is a 202-residue protein sequence, read N- to C-terminus: Small ribosomal subunit protein uS4c (202 aa).

The S4 RNA-binding domain occupies M90–N152.

The protein belongs to the universal ribosomal protein uS4 family. Part of the 30S ribosomal subunit. Contacts protein S5. The interaction surface between S4 and S5 is involved in control of translational fidelity.

Its subcellular location is the plastid. It localises to the chloroplast. In terms of biological role, one of the primary rRNA binding proteins, it binds directly to 16S rRNA where it nucleates assembly of the body of the 30S subunit. Functionally, with S5 and S12 plays an important role in translational accuracy. The sequence is that of Small ribosomal subunit protein uS4c (rps4) from Dendrohypopterygium filiculiforme (Moss).